The following is a 241-amino-acid chain: Probable transcriptional regulatory protein AZOSEA20720 (241 aa).

The segment at 1–21 (MAGHSKWANIQHRKGRQDAKR) is disordered.

Belongs to the TACO1 family.

Its subcellular location is the cytoplasm. The polypeptide is Probable transcriptional regulatory protein AZOSEA20720 (Aromatoleum aromaticum (strain DSM 19018 / LMG 30748 / EbN1) (Azoarcus sp. (strain EbN1))).